A 242-amino-acid chain; its full sequence is Trypsin-1 (242 aa).

An N-terminal signal peptide occupies residues 1-15 (MISLVFVLLIGAAFA). The propeptide at 16 to 20 (TEDDK) is activation peptide. A Peptidase S1 domain is found at 21–240 (IVGGYECKAY…FNDWLTSTMA (220 aa)). 6 disulfides stabilise this stretch: Cys-27/Cys-156, Cys-45/Cys-61, Cys-129/Cys-229, Cys-136/Cys-202, Cys-167/Cys-181, and Cys-192/Cys-216. His-60 functions as the Charge relay system in the catalytic mechanism. Ca(2+) contacts are provided by Glu-72, Asn-74, Val-77, and Glu-82. The active-site Charge relay system is the Asp-104. The active-site Charge relay system is Ser-196.

Belongs to the peptidase S1 family. Ca(2+) serves as cofactor.

Its subcellular location is the secreted. The protein localises to the extracellular space. It carries out the reaction Preferential cleavage: Arg-|-Xaa, Lys-|-Xaa.. In Salmo salar (Atlantic salmon), this protein is Trypsin-1.